The sequence spans 537 residues: CTP synthase (537 aa).

Residues methionine 1 to leucine 269 form an amidoligase domain region. Residue serine 15 participates in CTP binding. Serine 15 provides a ligand contact to UTP. Serine 16–isoleucine 21 provides a ligand contact to ATP. Residue tyrosine 56 coordinates L-glutamine. Aspartate 73 lines the ATP pocket. Aspartate 73 and glutamate 143 together coordinate Mg(2+). Residues aspartate 150–glutamate 152, lysine 190–glutamine 195, and lysine 226 each bind CTP. UTP-binding positions include lysine 190–glutamine 195 and lysine 226. The 243-residue stretch at serine 295–lysine 537 folds into the Glutamine amidotransferase type-1 domain. Glycine 357 serves as a coordination point for L-glutamine. The active-site Nucleophile; for glutamine hydrolysis is cysteine 384. L-glutamine-binding positions include leucine 385 to glutamine 388, glutamate 408, and arginine 465. Active-site residues include histidine 510 and glutamate 512.

This sequence belongs to the CTP synthase family. Homotetramer.

It catalyses the reaction UTP + L-glutamine + ATP + H2O = CTP + L-glutamate + ADP + phosphate + 2 H(+). The enzyme catalyses L-glutamine + H2O = L-glutamate + NH4(+). The catalysed reaction is UTP + NH4(+) + ATP = CTP + ADP + phosphate + 2 H(+). It functions in the pathway pyrimidine metabolism; CTP biosynthesis via de novo pathway; CTP from UDP: step 2/2. Its activity is regulated as follows. Allosterically activated by GTP, when glutamine is the substrate; GTP has no effect on the reaction when ammonia is the substrate. The allosteric effector GTP functions by stabilizing the protein conformation that binds the tetrahedral intermediate(s) formed during glutamine hydrolysis. Inhibited by the product CTP, via allosteric rather than competitive inhibition. Functionally, catalyzes the ATP-dependent amination of UTP to CTP with either L-glutamine or ammonia as the source of nitrogen. Regulates intracellular CTP levels through interactions with the four ribonucleotide triphosphates. The chain is CTP synthase from Flavobacterium psychrophilum (strain ATCC 49511 / DSM 21280 / CIP 103535 / JIP02/86).